Consider the following 511-residue polypeptide: Coatomer subunit delta (511 aa).

Over residues 168–177 (QARRDAERQG) the composition is skewed to basic and acidic residues. The segment at 168–188 (QARRDAERQGKKAPGFGGFGS) is disordered. S223 is subject to Phosphoserine. An N6-acetyllysine mark is found at K233 and K241. At S244 the chain carries Phosphoserine. The MHD domain occupies 271–511 (MESVHMKIEE…TFLVDKYEIL (241 aa)). An N6-acetyllysine mark is found at K309 and K351. S493 carries the post-translational modification Phosphoserine.

Belongs to the adaptor complexes medium subunit family. Delta-COP subfamily. In terms of assembly, oligomeric complex that consists of at least the alpha, beta, beta', gamma, delta, epsilon and zeta subunits. In terms of tissue distribution, ubiquitously expressed.

The protein resides in the cytoplasm. The protein localises to the golgi apparatus membrane. Its subcellular location is the cytoplasmic vesicle. It localises to the COPI-coated vesicle membrane. Its function is as follows. Component of the coatomer, a cytosolic protein complex that binds to dilysine motifs and reversibly associates with Golgi non-clathrin-coated vesicles, which further mediate biosynthetic protein transport from the ER, via the Golgi up to the trans Golgi network. The coatomer complex is required for budding from Golgi membranes, and is essential for the retrograde Golgi-to-ER transport of dilysine-tagged proteins. In mammals, the coatomer can only be recruited by membranes associated to ADP-ribosylation factors (ARFs), which are small GTP-binding proteins; the complex also influences the Golgi structural integrity, as well as the processing, activity, and endocytic recycling of LDL receptors. The protein is Coatomer subunit delta (ARCN1) of Homo sapiens (Human).